The following is a 178-amino-acid chain: Adenine phosphoribosyltransferase (178 aa).

It belongs to the purine/pyrimidine phosphoribosyltransferase family. Homodimer.

Its subcellular location is the cytoplasm. The enzyme catalyses AMP + diphosphate = 5-phospho-alpha-D-ribose 1-diphosphate + adenine. Its pathway is purine metabolism; AMP biosynthesis via salvage pathway; AMP from adenine: step 1/1. Its function is as follows. Catalyzes a salvage reaction resulting in the formation of AMP, that is energically less costly than de novo synthesis. The sequence is that of Adenine phosphoribosyltransferase from Bacteroides fragilis (strain ATCC 25285 / DSM 2151 / CCUG 4856 / JCM 11019 / LMG 10263 / NCTC 9343 / Onslow / VPI 2553 / EN-2).